The primary structure comprises 413 residues: Serine hydroxymethyltransferase (413 aa).

Residues L118 and 122–124 (GHL) contribute to the (6S)-5,6,7,8-tetrahydrofolate site. The residue at position 228 (K228) is an N6-(pyridoxal phosphate)lysine.

The protein belongs to the SHMT family. Homodimer. It depends on pyridoxal 5'-phosphate as a cofactor.

The protein resides in the cytoplasm. The catalysed reaction is (6R)-5,10-methylene-5,6,7,8-tetrahydrofolate + glycine + H2O = (6S)-5,6,7,8-tetrahydrofolate + L-serine. The protein operates within one-carbon metabolism; tetrahydrofolate interconversion. Its pathway is amino-acid biosynthesis; glycine biosynthesis; glycine from L-serine: step 1/1. In terms of biological role, catalyzes the reversible interconversion of serine and glycine with tetrahydrofolate (THF) serving as the one-carbon carrier. This reaction serves as the major source of one-carbon groups required for the biosynthesis of purines, thymidylate, methionine, and other important biomolecules. Also exhibits THF-independent aldolase activity toward beta-hydroxyamino acids, producing glycine and aldehydes, via a retro-aldol mechanism. The protein is Serine hydroxymethyltransferase of Phytoplasma australiense.